The primary structure comprises 530 residues: Probable ATP-binding protein YbiT (530 aa).

ABC transporter domains are found at residues 2–252 (LVSS…ERLL) and 320–526 (LEVE…YLRS). ATP is bound by residues 34–41 (GANGSGKS) and 352–359 (GTNGVGKS).

It belongs to the ABC transporter superfamily. ABCF family. YbiT subfamily.

This chain is Probable ATP-binding protein YbiT (ybiT), found in Escherichia coli O157:H7.